Consider the following 513-residue polypeptide: Autophagy-related protein 18 (513 aa).

Residues 2 to 40 (SDLPIINFINFNQNGTCISIGTSQGFKIFNCEPFGRFYQ) form a WD 1 repeat. The segment at 167-225 (NNINIKKSDAAEDPLRKDHFAYDPSDHSHPQSTTESTSNNHNRTYSSGNNNNTNSNPNK) is disordered. The segment covering 172-195 (KKSDAAEDPLRKDHFAYDPSDHSH) has biased composition (basic and acidic residues). The segment covering 205-225 (NNHNRTYSSGNNNNTNSNPNK) has biased composition (low complexity). Residues 248 to 288 (AHKGEIAALKLSADGTLLATASEKGTIIRVFNVENGSKVYQ) form a WD 2 repeat. The tract at residues 289–292 (FRRG) is necessary for proper localization to vacuole membrane. A L/FRRG motif motif is present at residues 289–293 (FRRGT). The stretch at 293-332 (TYSTKISSLSFSKDNQFLAVCSSSKTVHIFKLGEKIIDNT) is one WD 3 repeat. The tract at residues 333–398 (KPNELNSDDD…TVGRMIRKSS (66 aa)) is disordered. Acidic residues predominate over residues 338–369 (NSDDDMDDDLLPQFENGDDEEEVDEETLDEEA).

It belongs to the WD repeat PROPPIN family. In terms of assembly, component of the PI(3,5)P2 regulatory complex. Interacts with ATG2 and ATG9. The ATG2-ATG18 complex is essential for autophagosome formation.

It localises to the preautophagosomal structure membrane. The protein resides in the vacuole membrane. The protein localises to the endosome membrane. Component of the PI(3,5)P2 regulatory complex that regulates both the synthesis and turnover of phosphatidylinositol 3,5-bisphosphate (PtdIns(3,5)P2). Plays an important role in osmotically-induced vacuole fragmentation. Required for cytoplasm to vacuole transport (Cvt) vesicle formation, pexophagy and starvation-induced autophagy. Involved in correct ATG9 trafficking to the pre-autophagosomal structure. With ATG2, protects ATG8 from ATG4-mediated cleavage. The protein is Autophagy-related protein 18 of Kluyveromyces marxianus (strain DMKU3-1042 / BCC 29191 / NBRC 104275) (Yeast).